The sequence spans 239 residues: MLPSIAKHAASHQINPLKKHGQNFIFDSSLCDKIVRASNLAENSRVLEIGPGTGGLTRSILQKNPASLTVIETDERCIPLLNEIKEYYPNLNIIKQDALKINLTDLGYDKVTIISNLPYHIGTELVIRWLKEARLITNMTLMLQKEVVERICAMPSTKAYGRLSVICQLITKVEKCFDVAPTAFYPPPKVYSAIVKLIPLENPPSIALINKVEQITKLAFAGRRKMIKSSLKNLVPNIH.

Positions 23, 25, 50, 72, 97, and 116 each coordinate S-adenosyl-L-methionine.

This sequence belongs to the class I-like SAM-binding methyltransferase superfamily. rRNA adenine N(6)-methyltransferase family. RsmA subfamily.

It localises to the cytoplasm. It carries out the reaction adenosine(1518)/adenosine(1519) in 16S rRNA + 4 S-adenosyl-L-methionine = N(6)-dimethyladenosine(1518)/N(6)-dimethyladenosine(1519) in 16S rRNA + 4 S-adenosyl-L-homocysteine + 4 H(+). In terms of biological role, specifically dimethylates two adjacent adenosines (A1518 and A1519) in the loop of a conserved hairpin near the 3'-end of 16S rRNA in the 30S particle. May play a critical role in biogenesis of 30S subunits. In Rickettsia felis (strain ATCC VR-1525 / URRWXCal2) (Rickettsia azadi), this protein is Ribosomal RNA small subunit methyltransferase A.